The following is a 1392-amino-acid chain: FERM and PDZ domain-containing protein 2 (1392 aa).

The KIND domain occupies 15 to 197 (VTLASALQVR…SEVERRVVEE (183 aa)). The segment at 211–246 (SRLHQADGESPGAPASDALQPRRVSERSAETQSSLE) is disordered. One can recognise an FERM domain in the interval 342-642 (CVVLLNGRCL…WFNAQTGSKH (301 aa)). One can recognise a PDZ 1 domain in the interval 775 to 861 (GLFGEPNQDI…MAVRMIQNSP (87 aa)). The tract at residues 903 to 930 (GRQSPHIHDQDRSVRGTEMAQGAGSCPP) is disordered. The segment covering 908–917 (HIHDQDRSVR) has biased composition (basic and acidic residues). Residues 937–1027 (TGEIYFVELV…VARLVLERRG (91 aa)) form an interaction with GRIN2A and GRIN2B region. 2 PDZ domains span residues 950 to 1035 (GTLG…PQCP) and 1079 to 1167 (RGLG…PEME). The disordered stretch occupies residues 1186-1236 (CAGSEQSPSLDQEDNWRDSTSLDAGEGLSPGPESSYKDVRQVKGDREKERP). A compositionally biased stretch (basic and acidic residues) spans 1220–1236 (SYKDVRQVKGDREKERP).

Interacts (via the second PDZ domain) with CTNND2 (via the extreme C-terminus). Interacts (via the second PDZ domain) with PKP4 (via the extreme C-terminus); the interaction directs FRMPD2 to the basolateral membranes. Interacts (via the second PDZ domain) with ARVCF (via the extreme C-terminus). Interacts (via the second PDZ domain) with NMDAR subunits GRIN2A/GLUN2A and GRIN2B/GLUN2B (via the extreme C-terminus); the interaction is direct and is likely to promote NMDAR-mediated neural signal transmission. Binds GRIN2A with lower affinity than GRIN2B. Interacts (via the third PDZ domain) with LRIT1 (via the extreme C-terminus); the interaction leads to their colocalization in photoreceptor synapses. Interacts with NOD2; the interaction is likely to trigger NOD2-mediated nuclear factor kappaB activation.

Its subcellular location is the cytoplasm. It localises to the postsynaptic density. The protein localises to the basolateral cell membrane. It is found in the cell junction. The protein resides in the tight junction. Functions as a scaffold protein and likely plays a role in N-methyl-D-aspartic acid receptor (NMDAR)-mediated synaptic excitatory transmission. May be involved in synapse formation in cone photoreceptor cells. May play a role in the regulation of tight junction formation. Binds phosphatidylinositol 3,4-bisphosphate (PtdIns(3,4)P2). May pNF-kappa-Blay a role in the regulation of NOD2-mediated NF-kappa-B activation in immune response. The protein is FERM and PDZ domain-containing protein 2 of Mus musculus (Mouse).